A 446-amino-acid polypeptide reads, in one-letter code: Mitochondrial ribonuclease P protein 1 homolog (446 aa).

The transit peptide at 1-24 directs the protein to the mitochondrion; the sequence is MLKHFARWRLGSQLLKGCAAPVRQ. The tract at residues 41–67 is disordered; sequence PQKKFVNPFSQPAPALSNDTISENKEE. 2 positions are modified to phosphoserine: serine 50 and serine 57. Residue threonine 60 is modified to Phosphothreonine. Serine 62 is subject to Phosphoserine. A coiled-coil region spans residues 119–158; sequence LWQIEMKKEADQRKKAERAKEAERRVAEMRKEREENTHII. Residues 179 to 373 enclose the SAM-dependent MTase TRM10-type domain; that stretch reads QNNRLTRAMQ…KHVPRRKVVQ (195 aa).

The protein belongs to the class IV-like SAM-binding methyltransferase superfamily. TRM10 family. As to quaternary structure, component of mitochondrial ribonuclease P, a complex composed of rswl/MRPP1, scu/MRPP2 and mldr/MRPP3.

The protein localises to the mitochondrion. Functionally, mitochondrial tRNA N1-methyltransferase involved in mitochondrial tRNA maturation. Component of mitochondrial ribonuclease P, a complex composed of rswl/MRPP1, scu/MRPP2 and mldr/MRPP3., which cleaves tRNA molecules in their 5'-ends. Essential for the structural and functional integrity of mitochondria. Function is essential for pupal development. The sequence is that of Mitochondrial ribonuclease P protein 1 homolog from Drosophila melanogaster (Fruit fly).